The chain runs to 278 residues: 3-methyl-2-oxobutanoate hydroxymethyltransferase (278 aa).

Mg(2+) is bound by residues Asp-43 and Asp-82. Residues Asp-43 to Ser-44, Asp-82, and Lys-112 contribute to the 3-methyl-2-oxobutanoate site. Glu-114 contributes to the Mg(2+) binding site. The active-site Proton acceptor is Glu-181.

The protein belongs to the PanB family. As to quaternary structure, homodecamer; pentamer of dimers. Mg(2+) serves as cofactor.

Its subcellular location is the cytoplasm. The catalysed reaction is 3-methyl-2-oxobutanoate + (6R)-5,10-methylene-5,6,7,8-tetrahydrofolate + H2O = 2-dehydropantoate + (6S)-5,6,7,8-tetrahydrofolate. Its pathway is cofactor biosynthesis; (R)-pantothenate biosynthesis; (R)-pantoate from 3-methyl-2-oxobutanoate: step 1/2. Functionally, catalyzes the reversible reaction in which hydroxymethyl group from 5,10-methylenetetrahydrofolate is transferred onto alpha-ketoisovalerate to form ketopantoate. This Bacillus cereus (strain AH187) protein is 3-methyl-2-oxobutanoate hydroxymethyltransferase.